The chain runs to 502 residues: TNF receptor-associated factor family protein DDB_G0268444 (502 aa).

An RING-type; degenerate zinc finger spans residues 28-68 (CSICYESVYKKEIYQCKEIHWFCKTCWAESLFKKKECMICR). 2 consecutive TRAF-type zinc fingers follow at residues 129 to 183 (KHLK…SRSL) and 185 to 243 (NHYK…PKSN). The stretch at 261–295 (IESQSLQIKETNIKYENLLNKINKLEQLETESKCD) forms a coiled coil. An MATH domain is found at 368 to 489 (KYKNRWSISN…DDSLVIDFSI (122 aa)).

Belongs to the TNF receptor-associated factor family. A subfamily.

The protein localises to the cytoplasm. In terms of biological role, probable adapter protein and signal transducer that links members of the tumor necrosis factor receptor family to different signaling pathways by association with the receptor cytoplasmic domain and kinases. The chain is TNF receptor-associated factor family protein DDB_G0268444 from Dictyostelium discoideum (Social amoeba).